The following is a 302-amino-acid chain: HPr kinase/phosphorylase (302 aa).

Active-site residues include histidine 136 and lysine 157. Residue 151–158 (GESGIGKS) participates in ATP binding. Serine 158 lines the Mg(2+) pocket. Aspartate 175 (proton acceptor; for phosphorylation activity. Proton donor; for dephosphorylation activity) is an active-site residue. The important for the catalytic mechanism of both phosphorylation and dephosphorylation stretch occupies residues 198 to 207 (LEVRGLGIID). Residue glutamate 199 coordinates Mg(2+). Residue arginine 240 is part of the active site. The important for the catalytic mechanism of dephosphorylation stretch occupies residues 261 to 266 (PIRPGR).

This sequence belongs to the HPrK/P family. As to quaternary structure, homohexamer. Requires Mg(2+) as cofactor.

The enzyme catalyses [HPr protein]-L-serine + ATP = [HPr protein]-O-phospho-L-serine + ADP + H(+). It carries out the reaction [HPr protein]-O-phospho-L-serine + phosphate + H(+) = [HPr protein]-L-serine + diphosphate. In terms of biological role, catalyzes the ATP- as well as the pyrophosphate-dependent phosphorylation of a specific serine residue in HPr, a phosphocarrier protein of the phosphoenolpyruvate-dependent sugar phosphotransferase system (PTS). HprK/P also catalyzes the pyrophosphate-producing, inorganic phosphate-dependent dephosphorylation (phosphorolysis) of seryl-phosphorylated HPr (P-Ser-HPr). The two antagonistic activities of HprK/P are regulated by several intracellular metabolites, which change their concentration in response to the absence or presence of rapidly metabolisable carbon sources (glucose, fructose, etc.) in the growth medium. Therefore, by controlling the phosphorylation state of HPr, HPrK/P is a sensor enzyme that plays a major role in the regulation of carbon metabolism and sugar transport: it mediates carbon catabolite repression (CCR), and regulates PTS-catalyzed carbohydrate uptake and inducer exclusion. The sequence is that of HPr kinase/phosphorylase from Clostridium beijerinckii (strain ATCC 51743 / NCIMB 8052) (Clostridium acetobutylicum).